The following is a 492-amino-acid chain: N-succinylglutamate 5-semialdehyde dehydrogenase (492 aa).

220-225 (GSASTG) is a binding site for NAD(+). Catalysis depends on residues glutamate 243 and cysteine 277.

The protein belongs to the aldehyde dehydrogenase family. AstD subfamily.

The catalysed reaction is N-succinyl-L-glutamate 5-semialdehyde + NAD(+) + H2O = N-succinyl-L-glutamate + NADH + 2 H(+). Its pathway is amino-acid degradation; L-arginine degradation via AST pathway; L-glutamate and succinate from L-arginine: step 4/5. Functionally, catalyzes the NAD-dependent reduction of succinylglutamate semialdehyde into succinylglutamate. The chain is N-succinylglutamate 5-semialdehyde dehydrogenase from Salmonella schwarzengrund (strain CVM19633).